The sequence spans 312 residues: tRNA pseudouridine synthase B (312 aa).

The Nucleophile role is filled by Asp38.

The protein belongs to the pseudouridine synthase TruB family. Type 1 subfamily.

It catalyses the reaction uridine(55) in tRNA = pseudouridine(55) in tRNA. Its function is as follows. Responsible for synthesis of pseudouridine from uracil-55 in the psi GC loop of transfer RNAs. This chain is tRNA pseudouridine synthase B, found in Syntrophus aciditrophicus (strain SB).